The chain runs to 337 residues: MREPAFWRRPSSLLSRLLIPVGALYGAIAARRLSRTGLRAGVPVICVGNYHLGGAGKTPTVLALAGILRSLGETPVVISRGYGGRLRGPVRVDPDRHAAADVGDEPLMMARTLPVIVSRQRAAGVAPARALGASVILMDDGFQNPTLARDISLIVIDGDRGLGNRRIFPAGPLRAPLPPQLARTDALVIVGPGSAADDIAASIEARGGPVLRARVVPDEASVAALRGRRVLAFAGIGDPSRFFRGLRACGVDVAAERAFADHHPFSQRDVAALQSAAEKDGLTLVTTEKDLARLRNNENIAAFAQAVAPFAVTLAFDDETALRSFLMDGIAKVRRLD.

51–58 (HLGGAGKT) serves as a coordination point for ATP.

It belongs to the LpxK family.

It carries out the reaction a lipid A disaccharide + ATP = a lipid IVA + ADP + H(+). Its pathway is glycolipid biosynthesis; lipid IV(A) biosynthesis; lipid IV(A) from (3R)-3-hydroxytetradecanoyl-[acyl-carrier-protein] and UDP-N-acetyl-alpha-D-glucosamine: step 6/6. In terms of biological role, transfers the gamma-phosphate of ATP to the 4'-position of a tetraacyldisaccharide 1-phosphate intermediate (termed DS-1-P) to form tetraacyldisaccharide 1,4'-bis-phosphate (lipid IVA). This chain is Tetraacyldisaccharide 4'-kinase, found in Nitrobacter winogradskyi (strain ATCC 25391 / DSM 10237 / CIP 104748 / NCIMB 11846 / Nb-255).